The primary structure comprises 236 residues: MFMTKDLFFVYIFTTMIKLVVLDVDGTLTDKSRMISVNAVNAIRNLKTKVALVSGNVLPVLYGLKIYIGFDGYIFAENGGIALINNNIEKFFEKDGPESFLNDISGYTSARGILTNRWRETSMAFTANHDEMDIIDREAASRDLYIVDSGFTLHILNKGQDKGFAVKKMIDIMNIDYNNVLVIGDSQNDESMFSLGTLSACPGNASEKIKEMSNYVSGKCYGDELFDVFRHFDLIH.

Asp23 serves as the catalytic Nucleophile. The Mg(2+) site is built by Asp23 and Asp25. Lys162 is a binding site for substrate. Residues Asp185 and Asp189 each contribute to the Mg(2+) site.

The protein belongs to the archaeal SPP-like hydrolase family. Mg(2+) serves as cofactor.

The enzyme catalyses 2-phosphoglycolate + H2O = glycolate + phosphate. Functionally, catalyzes the dephosphorylation of 2-phosphoglycolate. This Picrophilus torridus (strain ATCC 700027 / DSM 9790 / JCM 10055 / NBRC 100828 / KAW 2/3) protein is Phosphoglycolate phosphatase.